We begin with the raw amino-acid sequence, 268 residues long: MARFETLFAQLNAKKQGGFVPFVTLCDPDLERSFDIICTLVDNGADALELGFPFSDPLLDGPVIQAANNRALNAGCSTAESFKLLEKVRSKYPEIPIGLLLCANLIYAQTLDGFYRRCAEIGIDAVLVADIPLLAAEPYIQAAKKHGIQPVFICPPNADENTVKGVAEHSEGYTYLVSRAGVTSAENQSHAANLDSLVEQLKAHNAPPILQGFGIAKPQQVKEALNMGVAGAISGSATVKIIEANLDNHEKCLADLAEFVKNMKAATL.

Residues glutamate 49 and aspartate 60 each act as proton acceptor in the active site.

This sequence belongs to the TrpA family. In terms of assembly, tetramer of two alpha and two beta chains.

The catalysed reaction is (1S,2R)-1-C-(indol-3-yl)glycerol 3-phosphate + L-serine = D-glyceraldehyde 3-phosphate + L-tryptophan + H2O. It participates in amino-acid biosynthesis; L-tryptophan biosynthesis; L-tryptophan from chorismate: step 5/5. In terms of biological role, the alpha subunit is responsible for the aldol cleavage of indoleglycerol phosphate to indole and glyceraldehyde 3-phosphate. The protein is Tryptophan synthase alpha chain of Mannheimia succiniciproducens (strain KCTC 0769BP / MBEL55E).